Reading from the N-terminus, the 84-residue chain is Trefoil factor 1 (84 aa).

Positions 1–24 (MATMENKVICALVLVSMLALGTLA) are cleaved as a signal peptide. In terms of domain architecture, P-type spans 29–72 (ETCTVAPRERQNCGFPGVTPSQCANKGCCFDDTVRGVPWCFYPN). 3 disulfides stabilise this stretch: cysteine 31/cysteine 57, cysteine 41/cysteine 56, and cysteine 51/cysteine 68.

In terms of assembly, heterodimer with GKN2; disulfide linked. Found in stomach, with highest levels in the upper gastric mucosal cells (at protein level). Detected in goblet cells of the small and large intestine and rectum, small submucosal glands in the esophagus, mucous acini of the sublingual gland, submucosal glands of the trachea, and epithelial cells lining the exocrine pancreatic ducts but not in the remainder of the pancreas (at protein level). Scattered expression is detected in the epithelial cells of the gallbladder and submucosal glands of the vagina, and weak expression is observed in the bronchial goblet cells of the pseudostratified epithelia in the respiratory system (at protein level). Detected in urine (at protein level). Strongly expressed in breast cancer but at low levels in normal mammary tissue. It is regulated by estrogen in MCF-7 cells. Strong expression found in normal gastric mucosa and in the regenerative tissues surrounding ulcerous lesions of gastrointestinal tract, but lower expression found in gastric cancer (at protein level).

It is found in the secreted. Stabilizer of the mucous gel overlying the gastrointestinal mucosa that provides a physical barrier against various noxious agents. May inhibit the growth of calcium oxalate crystals in urine. The protein is Trefoil factor 1 (TFF1) of Homo sapiens (Human).